Reading from the N-terminus, the 483-residue chain is Protein adenylyltransferase Fic (483 aa).

Residues Ala-20–Val-42 form a helical membrane-spanning segment. 2 TPR repeats span residues Ala-107–His-140 and Pro-141–Asn-175. Positions Ser-232–Gly-237 match the Inhibitory (S/T)XXXE(G/N) motif motif. Residues Glu-236 and Val-317 to His-320 contribute to the ATP site. Residues Ile-286–Asp-421 form the Fido domain. The active site involves His-364. Residues Asp-368–Arg-375, Tyr-400–Tyr-401, and Asn-408 each bind ATP. The segment at Ser-464–Pro-483 is disordered.

Belongs to the fic family. In terms of assembly, homodimer.

It localises to the membrane. It carries out the reaction L-tyrosyl-[protein] + ATP = O-(5'-adenylyl)-L-tyrosyl-[protein] + diphosphate. The enzyme catalyses L-threonyl-[protein] + ATP = 3-O-(5'-adenylyl)-L-threonyl-[protein] + diphosphate. It catalyses the reaction 3-O-(5'-adenylyl)-L-threonyl-[protein] + H2O = L-threonyl-[protein] + AMP + H(+). The side chain of Glu-236 determines which of the two opposing activities (AMPylase or de-AMPylase) will take place. In response to endoplasmic reticulum stress, mediates de-AMPylase activity. Adenylyltransferase activity is inhibited by the inhibitory helix present at the N-terminus: Glu-236 binds ATP and competes with ATP-binding at Arg-375, thereby preventing adenylyltransferase activity. In unstressed cells, disengagement of Glu-236 promotes adenylyltransferase activity. Activation dissociates ATP-binding from Glu-236, allowing ordered binding of the entire ATP moiety with the alpha-phosphate in an orientation that is productive for accepting an incoming target hydroxyl side chain. Protein that can both mediate the addition of adenosine 5'-monophosphate (AMP) to specific residues of target proteins (AMPylation), and the removal of the same modification from target proteins (de-AMPylation), depending on the context. The side chain of Glu-236 determines which of the two opposing activities (AMPylase or de-AMPylase) will take place. Acts as a key regulator of the unfolded protein response (UPR) by mediating AMPylation or de-AMPylation of Hsc70-3/BiP. In unstressed cells, acts as an adenylyltransferase by mediating AMPylation of Hsc70-3/BiP at 'Thr-518', thereby inactivating it. In response to endoplasmic reticulum stress, acts as a phosphodiesterase by mediating removal of ATP (de-AMPylation) from Hsc70-3/BiP at 'Thr-518', leading to restore HSPA5/BiP activity. This chain is Protein adenylyltransferase Fic, found in Drosophila grimshawi (Hawaiian fruit fly).